Reading from the N-terminus, the 511-residue chain is Maturase K (511 aa).

The protein belongs to the intron maturase 2 family. MatK subfamily.

The protein resides in the plastid. Its subcellular location is the chloroplast. In terms of biological role, usually encoded in the trnK tRNA gene intron. Probably assists in splicing its own and other chloroplast group II introns. This is Maturase K from Hordeum secalinum (Meadow barley).